The chain runs to 194 residues: 22 kDa relaxation protein (194 aa).

In terms of biological role, this protein is probably required for relaxation complex formation. The chain is 22 kDa relaxation protein from Salmonella typhimurium.